A 275-amino-acid chain; its full sequence is Putative carbamate hydrolase RutD (275 aa).

This sequence belongs to the AB hydrolase superfamily. Hydrolase RutD family.

It carries out the reaction carbamate + 2 H(+) = NH4(+) + CO2. In terms of biological role, involved in pyrimidine catabolism. May facilitate the hydrolysis of carbamate, a reaction that can also occur spontaneously. The chain is Putative carbamate hydrolase RutD from Escherichia coli (strain UTI89 / UPEC).